Here is a 957-residue protein sequence, read N- to C-terminus: Isoleucine--tRNA ligase (957 aa).

The 'HIGH' region signature appears at 57–67 (PYANGDIHIGH). Residue glutamate 594 participates in L-isoleucyl-5'-AMP binding. Positions 635-639 (KMSKS) match the 'KMSKS' region motif. ATP is bound at residue lysine 638. Zn(2+) contacts are provided by cysteine 920, cysteine 923, cysteine 940, and cysteine 943.

The protein belongs to the class-I aminoacyl-tRNA synthetase family. IleS type 1 subfamily. Monomer. Zn(2+) is required as a cofactor.

It is found in the cytoplasm. It carries out the reaction tRNA(Ile) + L-isoleucine + ATP = L-isoleucyl-tRNA(Ile) + AMP + diphosphate. Functionally, catalyzes the attachment of isoleucine to tRNA(Ile). As IleRS can inadvertently accommodate and process structurally similar amino acids such as valine, to avoid such errors it has two additional distinct tRNA(Ile)-dependent editing activities. One activity is designated as 'pretransfer' editing and involves the hydrolysis of activated Val-AMP. The other activity is designated 'posttransfer' editing and involves deacylation of mischarged Val-tRNA(Ile). The sequence is that of Isoleucine--tRNA ligase from Laribacter hongkongensis (strain HLHK9).